We begin with the raw amino-acid sequence, 609 residues long: Membrane protein insertase YidC (609 aa).

A helical membrane pass occupies residues 9-29 (IIAIVLSGLILIAWQYFYNIP). The interval 35-63 (RAAQQAQSQTAKSPTEPTPNSPKPDHPAA) is disordered. The next 4 helical transmembrane spans lie at 375–395 (VFGN…AIFF), 449–469 (LPMV…FVTI), 507–527 (LLGP…TMWF), and 546–566 (WMPV…VIYW).

The protein belongs to the OXA1/ALB3/YidC family. Type 1 subfamily. As to quaternary structure, interacts with the Sec translocase complex via SecD. Specifically interacts with transmembrane segments of nascent integral membrane proteins during membrane integration.

The protein resides in the cell inner membrane. In terms of biological role, required for the insertion and/or proper folding and/or complex formation of integral membrane proteins into the membrane. Involved in integration of membrane proteins that insert both dependently and independently of the Sec translocase complex, as well as at least some lipoproteins. Aids folding of multispanning membrane proteins. In Nitrobacter hamburgensis (strain DSM 10229 / NCIMB 13809 / X14), this protein is Membrane protein insertase YidC.